The sequence spans 235 residues: RING-H2 finger protein ATL17 (235 aa).

Residues methionine 1 to tyrosine 21 traverse the membrane as a helical segment. Residues cysteine 76 to arginine 118 form an RING-type; atypical zinc finger. Positions valine 143–lysine 167 are disordered.

Belongs to the RING-type zinc finger family. ATL subfamily.

The protein localises to the membrane. It catalyses the reaction S-ubiquitinyl-[E2 ubiquitin-conjugating enzyme]-L-cysteine + [acceptor protein]-L-lysine = [E2 ubiquitin-conjugating enzyme]-L-cysteine + N(6)-ubiquitinyl-[acceptor protein]-L-lysine.. It functions in the pathway protein modification; protein ubiquitination. In terms of biological role, may be involved in the early steps of the plant defense signaling pathway. This is RING-H2 finger protein ATL17 (ATL17) from Arabidopsis thaliana (Mouse-ear cress).